Reading from the N-terminus, the 286-residue chain is Protein HEAT-STRESS-ASSOCIATED 32 (286 aa).

This sequence belongs to the phosphosulfolactate synthase family.

Functionally, transactivator required, together with HSP101, for long-term acquired thermotolerance (LAT) maintenance, probably by regulating heat-inducible genes expression, thus being a cellular component of thermomemory. The polypeptide is Protein HEAT-STRESS-ASSOCIATED 32 (Arabidopsis thaliana (Mouse-ear cress)).